A 141-amino-acid polypeptide reads, in one-letter code: Nucleoside diphosphate kinase (141 aa).

ATP-binding residues include Lys11, Phe59, Arg87, Thr93, Arg104, and Asn114. The active-site Pros-phosphohistidine intermediate is His117.

The protein belongs to the NDK family. Homotetramer. Requires Mg(2+) as cofactor.

It localises to the cytoplasm. The enzyme catalyses a 2'-deoxyribonucleoside 5'-diphosphate + ATP = a 2'-deoxyribonucleoside 5'-triphosphate + ADP. It catalyses the reaction a ribonucleoside 5'-diphosphate + ATP = a ribonucleoside 5'-triphosphate + ADP. Major role in the synthesis of nucleoside triphosphates other than ATP. The ATP gamma phosphate is transferred to the NDP beta phosphate via a ping-pong mechanism, using a phosphorylated active-site intermediate. The protein is Nucleoside diphosphate kinase of Paracidovorax citrulli (strain AAC00-1) (Acidovorax citrulli).